A 695-amino-acid polypeptide reads, in one-letter code: uncharacterized protein (695 aa).

S113 is subject to Phosphoserine. The next 12 helical transmembrane spans lie at 237 to 257, 265 to 285, 313 to 333, 344 to 364, 380 to 400, 408 to 428, 457 to 477, 488 to 508, 531 to 551, 565 to 585, 604 to 624, and 633 to 653; these read FPLIFTFLLEQIFPMVCSLTV, LAAVSLASMTSNITLAIFEGI, IAFSLVIYIPFAVMWWYSEPL, INLTSRFLRVLILGAPAYIFF, GIYVLTICAPLNVLVSYTLVW, FIGAAIAVVLNFWLMFFLLLF, AFSGIIMLEAEELSYELLTLF, AQSAVSTMAALLYMIPFAIGI, QVGLSFSFIAGFINCCILVFG, VIKLIAQVLPLVGIVQNFDSL, IVNLMAYYLFGIPLALILSWF, and WIGIGSAMLLIGLVEAYYVLF. Over residues 673-688 the composition is skewed to acidic residues; the sequence is EVDSDEYLTDSDDPDE. Residues 673–695 form a disordered region; it reads EVDSDEYLTDSDDPDENTALLGA.

The protein belongs to the multi antimicrobial extrusion (MATE) (TC 2.A.66.1) family.

It is found in the membrane. This is an uncharacterized protein from Saccharomyces cerevisiae (strain ATCC 204508 / S288c) (Baker's yeast).